We begin with the raw amino-acid sequence, 688 residues long: MSNVTLRKMSPTGNEMKSTTQGTTRKQQDFHEVNKRRTFLQDNSWIKKRPEEEKDENYGRVVLNRHNSHDALDRKVNERDVPKATISRYSSDDTLDRISDRNDAAKTYKANTLDNQLTNRSMSMFRSLEVTKLQPGGSLNANTSNTIASTSATTPVKKKRQSWFPPPPPGYNASSSTGTRRREPGVHPPIPPKPSSPVSSPNQLRQDNRQIHPPKPGVYTETNRSAERNIRSQDLDNIVKVATSLQRSDKGEELDNLIKMNKSLNRNQGLDSLFRANPKVEEREKRAKSLESLIYMSTRTDKDGKGIQSLGSPIKVNQRTDKNEKGRQNLESVAKVNARMNKTSRRSEDLDNATEVNPKGHENTTGKKDLDGLIKVDPETNKNITRGQSLDNLIKVTPEVKRSNQGSKDLNNFIKVYPGTEKSTEGGQSLDSLIKVTPERNRTNQGNQDLENLIKVIPSANKSSEQGLDEHINVSPKAVKNTDGKQDLDKLIKVNPEIFTNNQRNQDLANLIKVNPAVIRNNQSQDLDNLIKVKPSALRNTNRDQNLENLIEVNSHVSENKNGSSNTGAKQAGPQDTVVYTRTYVENSKSPKDGYQENISGKYIQTVYSTSDRSVIERDMCTYCRKPLGVETKMILDELQICCHSTCFKCEICKQPLENLQAGDSIWIYRQTIHCEPCYSKIMAKWIP.

Over residues 1–25 (MSNVTLRKMSPTGNEMKSTTQGTTR) the composition is skewed to polar residues. Residues 1–29 (MSNVTLRKMSPTGNEMKSTTQGTTRKQQD) form a disordered region. Position 83 is an N6-acetyllysine (Lys83). Residues 134-231 (QPGGSLNANT…TNRSAERNIR (98 aa)) are disordered. The segment covering 140-154 (NANTSNTIASTSATT) has biased composition (low complexity). The segment covering 186 to 195 (VHPPIPPKPS) has biased composition (pro residues). 16 repeat units span residues 251–266 (GEEL…SLNR), 267–286 (NQGL…REKR), 287–306 (AKSL…DGKG), 307–326 (IQSL…NEKG), 327–346 (RQNL…TSRR), 347–366 (SEDL…NTTG), 367–386 (KKDL…NITR), 387–406 (GQSL…SNQG), 407–426 (SKDL…STEG), 427–446 (GQSL…TNQG), 447–465 (NQDL…KSSE), 466–484 (QGLD…NTDG), 485–504 (KQDL…NNQR), 505–523 (NQDL…RNNQ), 524–543 (SQDL…NTNR), and 544–563 (DQNL…NKNG). Residues 251-563 (GEELDNLIKM…NSHVSENKNG (313 aa)) are 16 X approximate tandem repeats. Phosphoserine is present on Ser289. Residues 340–373 (MNKTSRRSEDLDNATEVNPKGHENTTGKKDLDGL) are disordered. The span at 358-373 (PKGHENTTGKKDLDGL) shows a compositional bias: basic and acidic residues. Ser389 bears the Phosphoserine mark. Residues 619–685 (DMCTYCRKPL…EPCYSKIMAK (67 aa)) enclose the LIM zinc-binding domain.

In terms of tissue distribution, highly expressed in esophagus. It is also expressed in keratinocytes, amniotic tissue, foreskin stratum spinosum and stratum granulosum, hair follicle and nail.

It is found in the cytoplasm. It localises to the membrane. May function in the assembly or regulation of proteins in the cornified envelope. The LIM domain may be involved in homotypic or heterotypic associations and may function to localize sciellin to the cornified envelope. In Homo sapiens (Human), this protein is Sciellin (SCEL).